Here is a 183-residue protein sequence, read N- to C-terminus: MALKIAVVVGSLRRDSFNKQLAHALASLAPSDFSFDFVDIGGLPLYSQDYDSDFPEVARAFKQQIADADGLLIVTPEYNRSMPGVLKNALDWASRPWGQSVWGGKPGAIIGTSVGAIGTAIAQSHLRGVCAYLDIVLMNQPEMYIKHDESRIDANGNIVSEDTRKYLQTFMDKYAAWVRDRRV.

FMN contacts are provided by residues 11 to 18 (SLRRDSFN), 77 to 80 (EYNR), and serine 113.

It belongs to the SsuE family. In terms of assembly, homotetramer. FMN serves as cofactor.

It catalyses the reaction 2-hydroxy-1,4-benzoquinone + NADH + 2 H(+) = benzene-1,2,4-triol + NAD(+). Its function is as follows. Involved in the metabolism of 4-aminophenol. Catalyzes the reduction of the auto-oxidation product 2-hydroxy-1,4-benzoquinone back to hydroxyquinol. Has a broad substrate specificity toward benzoquinones, converting them to the corresponding 1,4-benzenediols. This Burkholderia sp protein is 2-hydroxy-1,4-benzoquinone reductase.